Consider the following 556-residue polypeptide: Glucose-6-phosphate isomerase (556 aa).

The active-site Proton donor is the E363. Active-site residues include H394 and K522.

Belongs to the GPI family.

The protein localises to the cytoplasm. It catalyses the reaction alpha-D-glucose 6-phosphate = beta-D-fructose 6-phosphate. It participates in carbohydrate biosynthesis; gluconeogenesis. Its pathway is carbohydrate degradation; glycolysis; D-glyceraldehyde 3-phosphate and glycerone phosphate from D-glucose: step 2/4. Functionally, catalyzes the reversible isomerization of glucose-6-phosphate to fructose-6-phosphate. This Frankia casuarinae (strain DSM 45818 / CECT 9043 / HFP020203 / CcI3) protein is Glucose-6-phosphate isomerase.